Consider the following 965-residue polypeptide: Translation initiation factor IF-2 (965 aa).

The tract at residues Arg94–Phe375 is disordered. The span at Glu104–Glu115 shows a compositional bias: low complexity. The span at Glu121–Lys177 shows a compositional bias: basic and acidic residues. Low complexity predominate over residues Ala181–Arg191. Positions Glu192–Arg253 are enriched in basic and acidic residues. The span at Pro267 to Ala276 shows a compositional bias: pro residues. The span at Lys303–Ala320 shows a compositional bias: low complexity. The segment covering Thr351–Lys364 has biased composition (gly residues). Positions Pro465 to Lys634 constitute a tr-type G domain. A G1 region spans residues Gly474–Thr481. GTP is bound at residue Gly474 to Thr481. The tract at residues Gly499–His503 is G2. The G3 stretch occupies residues Asp520–Gly523. Residues Asp520–His524 and Asn574–Asp577 each bind GTP. Residues Asn574–Asp577 are G4. The tract at residues Ser610–Lys612 is G5.

It belongs to the TRAFAC class translation factor GTPase superfamily. Classic translation factor GTPase family. IF-2 subfamily.

The protein resides in the cytoplasm. Its function is as follows. One of the essential components for the initiation of protein synthesis. Protects formylmethionyl-tRNA from spontaneous hydrolysis and promotes its binding to the 30S ribosomal subunits. Also involved in the hydrolysis of GTP during the formation of the 70S ribosomal complex. The chain is Translation initiation factor IF-2 from Paraburkholderia phymatum (strain DSM 17167 / CIP 108236 / LMG 21445 / STM815) (Burkholderia phymatum).